Consider the following 673-residue polypeptide: Zinc finger protein 16 (673 aa).

The span at 1 to 10 (MPSLRTRREE) shows a compositional bias: basic and acidic residues. The segment at 1 to 42 (MPSLRTRREEAEMELSAPGPSPWTPAPQARVSDAPAVTHPGS) is disordered. The segment at 62–210 (YQQPDCDTRT…GVPTAESPLI (149 aa)) is necessary for transcription activation. The C2H2-type 1; degenerate zinc finger occupies 209-231 (LICNECGKTFRGNPDLIQRQIVH). A C2H2-type 2; degenerate zinc finger spans residues 237 to 259 (FMCDDCGKTFSQNSVLKNRHXSH). Residue Lys253 forms a Glycyl lysine isopeptide (Lys-Gly) (interchain with G-Cter in SUMO2) linkage. C2H2-type zinc fingers lie at residues 284–306 (YTCT…QKSH), 312–334 (YECN…QRIH), 340–362 (YVCS…HRTH), 368–390 (FECG…QRVH), 396–418 (YECN…HRVH), 424–446 (YKCS…RRIH), and 452–474 (HVCN…QIIH). Positions 332 to 364 (RIHSGEKPYVCSECGKAFRRSSNLIKHHRTHTG) are required for nuclear localization. The interval 464 to 494 (SSVLRKHQIIHTGEKPYRCSVCGKAFSHSSA) is required for nuclear localization. An N6-acetyllysine modification is found at Lys478. 7 consecutive C2H2-type zinc fingers follow at residues 480–502 (YRCS…QGVH), 508–530 (YACH…QRVH), 536–558 (YECT…QRIH), 564–586 (HECN…QKVH), 592–614 (YTCV…QIIH), 620–642 (YKCS…QRIH), and 648–670 (YDCA…QLIH).

It belongs to the krueppel C2H2-type zinc-finger protein family. Interacts with INCA1; the interaction inhibits INCA1 activity and induces the cell cycle process.

It localises to the nucleus. Acts as a transcriptional activator. Promotes cell proliferation by facilitating the cell cycle phase transition from the S to G2/M phase. Involved in both the hemin- and phorbol myristate acetate (PMA)-induced erythroid and megakaryocytic differentiation, respectively. Also plays a role as an inhibitor of cell apoptosis. This chain is Zinc finger protein 16 (ZNF16), found in Pan paniscus (Pygmy chimpanzee).